The primary structure comprises 261 residues: Putative hydro-lyase Sfum_3393 (261 aa).

Belongs to the D-glutamate cyclase family.

In Syntrophobacter fumaroxidans (strain DSM 10017 / MPOB), this protein is Putative hydro-lyase Sfum_3393.